A 416-amino-acid polypeptide reads, in one-letter code: Heat shock protein DDB_G0280215 (416 aa).

The region spanning 37 to 150 (SMDWGWKPRM…SQHISLFGRE (114 aa)) is the sHSP domain. The interval 216 to 235 (ETKERERRIRDTKGETEKKK) is disordered.

Belongs to the small heat shock protein (HSP20) family.

This Dictyostelium discoideum (Social amoeba) protein is Heat shock protein DDB_G0280215.